The primary structure comprises 401 residues: Probable peptidoglycan glycosyltransferase FtsW (401 aa).

Residues 1–26 (MAEVLRWLRLDLGQSGGLAWERLDWR) lie on the Cytoplasmic side of the membrane. Residues 27–47 (LALTVLALAGLGLVMVGSASV) form a helical membrane-spanning segment. Over 48–65 (SIAEGATGDPLHYLYRQA) the chain is Periplasmic. The helical transmembrane segment at 66–86 (VFLAVALMAAVACLHLSLDQF) threads the bilayer. Residues 87–88 (YR) lie on the Cytoplasmic side of the membrane. Residues 89–109 (GGPVLLVLGFFLLLVVLIPGV) form a helical membrane-spanning segment. At 110-118 (GREVNGATR) the chain is on the periplasmic side. A helical transmembrane segment spans residues 119–139 (WIPLGLINLQVAEVARVCFII). Topologically, residues 140 to 154 (YLAGYCVRRHAELPN) are cytoplasmic. Residues 155 to 175 (TSSAFAVPLAVFSLAAVLLLA) form a helical membrane-spanning segment. Residues 176–180 (QPDFG) lie on the Periplasmic side of the membrane. The chain crosses the membrane as a helical span at residues 181 to 201 (TALVLMATALGLLFLAGASLW). Position 202 (Arg-202) is a topological domain, cytoplasmic. A helical transmembrane segment spans residues 203–223 (IGVLGLLLAGAAWLLIVGSPY). Residues 224-278 (RWQRLTTFTDPWADPFNAGFQLTQSLIAIGRGEWFGVGLGASVQKLFYLPEAHTD) are Periplasmic-facing. Residues 279-299 (FLFAVLAEELGLLGVVVVVAL) form a helical membrane-spanning segment. Residues 300–322 (FTYLAWRGMQIGLASLRADRPFG) are Cytoplasmic-facing. The helical transmembrane segment at 323-343 (AYLAWGLTISIGLQAFINMAV) threads the bilayer. Residues 344–354 (TMGLLPTKGLT) are Periplasmic-facing. A helical membrane pass occupies residues 355–375 (LPLMSYGGSSLIMTGIALALL). Residues 376–401 (LRVDYEARLAAQQPRPRKRPSGRVRP) lie on the Cytoplasmic side of the membrane.

This sequence belongs to the SEDS family. FtsW subfamily.

It is found in the cell inner membrane. The enzyme catalyses [GlcNAc-(1-&gt;4)-Mur2Ac(oyl-L-Ala-gamma-D-Glu-L-Lys-D-Ala-D-Ala)](n)-di-trans,octa-cis-undecaprenyl diphosphate + beta-D-GlcNAc-(1-&gt;4)-Mur2Ac(oyl-L-Ala-gamma-D-Glu-L-Lys-D-Ala-D-Ala)-di-trans,octa-cis-undecaprenyl diphosphate = [GlcNAc-(1-&gt;4)-Mur2Ac(oyl-L-Ala-gamma-D-Glu-L-Lys-D-Ala-D-Ala)](n+1)-di-trans,octa-cis-undecaprenyl diphosphate + di-trans,octa-cis-undecaprenyl diphosphate + H(+). Its pathway is cell wall biogenesis; peptidoglycan biosynthesis. Functionally, peptidoglycan polymerase that is essential for cell division. This Alkalilimnicola ehrlichii (strain ATCC BAA-1101 / DSM 17681 / MLHE-1) protein is Probable peptidoglycan glycosyltransferase FtsW.